We begin with the raw amino-acid sequence, 210 residues long: Probable GTP-binding protein EngB (210 aa).

Residues 25-199 (TGIEVAFAGR…RQKLDTWFSE (175 aa)) enclose the EngB-type G domain. GTP contacts are provided by residues 33–40 (GRSNAGKS), 60–64 (GRTQL), 78–81 (DLPG), 145–148 (TKTD), and 178–180 (FSS). Mg(2+) contacts are provided by serine 40 and threonine 62.

Belongs to the TRAFAC class TrmE-Era-EngA-EngB-Septin-like GTPase superfamily. EngB GTPase family. Mg(2+) serves as cofactor.

Necessary for normal cell division and for the maintenance of normal septation. In Escherichia coli O6:K15:H31 (strain 536 / UPEC), this protein is Probable GTP-binding protein EngB.